The following is a 534-amino-acid chain: Probable protein kinase UbiB (534 aa).

Residues 23–43 (DLLFDLPLPWFLLALRYVLPW) form a helical membrane-spanning segment. The Protein kinase domain occupies 125–492 (RFDVEPLASA…WKKRKDDWFL (368 aa)). ATP-binding positions include 131–139 (LASASVAQV) and Lys153. The active-site Proton acceptor is the Asp288. A run of 2 helical transmembrane segments spans residues 490-510 (WFLRLLGSAHLAGGTILAAGG) and 512-532 (LHELGHWPAGIMVAVGLYLVV).

It belongs to the ABC1 family. UbiB subfamily.

Its subcellular location is the cell inner membrane. The protein operates within cofactor biosynthesis; ubiquinone biosynthesis [regulation]. Is probably a protein kinase regulator of UbiI activity which is involved in aerobic coenzyme Q (ubiquinone) biosynthesis. The protein is Probable protein kinase UbiB of Pseudomonas fluorescens (strain Pf0-1).